We begin with the raw amino-acid sequence, 704 residues long: Polyribonucleotide nucleotidyltransferase (704 aa).

Mg(2+)-binding residues include Asp486 and Asp492. In terms of domain architecture, KH spans 553 to 612; the sequence is PKIVIVKINPDKIRDVIGPGGKQINKIIEETGVKIDTEQDGTIYISSANEEMNARAKQII. The S1 motif domain occupies 622–690; it reads GEYYLSTVKR…KQGRVNLSRK (69 aa).

It belongs to the polyribonucleotide nucleotidyltransferase family. Requires Mg(2+) as cofactor.

Its subcellular location is the cytoplasm. It catalyses the reaction RNA(n+1) + phosphate = RNA(n) + a ribonucleoside 5'-diphosphate. Involved in mRNA degradation. Catalyzes the phosphorolysis of single-stranded polyribonucleotides processively in the 3'- to 5'-direction. The polypeptide is Polyribonucleotide nucleotidyltransferase (Lysinibacillus sphaericus (strain C3-41)).